The primary structure comprises 379 residues: Glutamate 5-kinase (379 aa).

K15 serves as a coordination point for ATP. Substrate-binding residues include S54, D144, and N156. 176–177 (TD) contacts ATP. A PUA domain is found at 282-360 (KGVILVDAGA…GEIERALGYK (79 aa)).

The protein belongs to the glutamate 5-kinase family.

The protein resides in the cytoplasm. It carries out the reaction L-glutamate + ATP = L-glutamyl 5-phosphate + ADP. It participates in amino-acid biosynthesis; L-proline biosynthesis; L-glutamate 5-semialdehyde from L-glutamate: step 1/2. Its function is as follows. Catalyzes the transfer of a phosphate group to glutamate to form L-glutamate 5-phosphate. This chain is Glutamate 5-kinase, found in Anaeromyxobacter dehalogenans (strain 2CP-C).